Reading from the N-terminus, the 124-residue chain is Fluoride-specific ion channel FluC (124 aa).

The next 4 membrane-spanning stretches (helical) occupy residues 4-24 (LLLVALGGSIGAVFRYLISIF), 35-55 (FGTLLVNVLGSFLMGVIYALG), 60-80 (ISPELKALIGIGLLGALTTFS), and 102-122 (VVLNLSLCLFMVYLGQQLVFS). The Na(+) site is built by glycine 74 and threonine 77.

This sequence belongs to the fluoride channel Fluc/FEX (TC 1.A.43) family.

It localises to the cell inner membrane. The catalysed reaction is fluoride(in) = fluoride(out). Na(+) is not transported, but it plays an essential structural role and its presence is essential for fluoride channel function. In terms of biological role, fluoride-specific ion channel. Important for reducing fluoride concentration in the cell, thus reducing its toxicity. The protein is Fluoride-specific ion channel FluC of Shewanella baltica (strain OS185).